The following is a 159-amino-acid chain: Afifavidin (159 aa).

An N-terminal signal peptide occupies residues 1 to 23; that stretch reads MRRLASLAVALPLLAVVASPALA. One can recognise an Avidin-like domain in the interval 36-151; that stretch reads GVPAVSSSWV…GSDTFTLVNK (116 aa). Biotin is bound by residues N46, S50, Y66, N68, and G74. Cysteines 75 and 104 form a disulfide. Residues S106, T108, and D144 each contribute to the biotin site.

This sequence belongs to the avidin/streptavidin family. In terms of assembly, exhibits a dynamic oligomeric assembly: the apo form self-assembles mostly into toroid-shaped homooctamers, with a small fraction of homodimers, yet upon biotin binding the intact afifavidin consists solely of the dimer.

It localises to the secreted. Its function is as follows. The exact role played by afifavidin is still obscure. Forms a strong non-covalent complex with biotin and 2-iminobiotin. This Afifella pfennigii (Rhodobium pfennigii) protein is Afifavidin.